A 173-amino-acid chain; its full sequence is Bifunctional protein PyrR (173 aa).

Residues 93–105 (VILIDDVLYTGRT) carry the PRPP-binding motif.

It belongs to the purine/pyrimidine phosphoribosyltransferase family. PyrR subfamily. In terms of assembly, homodimer and homohexamer; in equilibrium.

The enzyme catalyses UMP + diphosphate = 5-phospho-alpha-D-ribose 1-diphosphate + uracil. Functionally, regulates transcriptional attenuation of the pyrimidine nucleotide (pyr) operon by binding in a uridine-dependent manner to specific sites on pyr mRNA. This disrupts an antiterminator hairpin in the RNA and favors formation of a downstream transcription terminator, leading to a reduced expression of downstream genes. Also displays a weak uracil phosphoribosyltransferase activity which is not physiologically significant. The polypeptide is Bifunctional protein PyrR (Streptococcus pyogenes serotype M12 (strain MGAS2096)).